The primary structure comprises 260 residues: Snake venom serine protease homolog (260 aa).

The N-terminal stretch at 1–18 (MVLVRVLANLLMLQLSYA) is a signal peptide. A propeptide spanning residues 19–24 (QKSSEL) is cleaved from the precursor. The 227-residue stretch at 25–251 (IIGGDECNIN…HLNWIQSIIA (227 aa)) folds into the Peptidase S1 domain. Intrachain disulfides connect cysteine 31–cysteine 165, cysteine 52–cysteine 68, cysteine 100–cysteine 258, cysteine 144–cysteine 212, cysteine 176–cysteine 191, and cysteine 202–cysteine 227. 2 N-linked (GlcNAc...) asparagine glycosylation sites follow: asparagine 123 and asparagine 124. A glycan (N-linked (GlcNAc...) asparagine) is linked at asparagine 253.

The protein belongs to the peptidase S1 family. Snake venom subfamily. In terms of tissue distribution, expressed by the venom gland.

It is found in the secreted. Functionally, snake venom serine protease homolog that may act in the hemostasis system of the prey. This Protobothrops jerdonii (Jerdon's pitviper) protein is Snake venom serine protease homolog.